The sequence spans 1038 residues: Type I restriction enzyme EcoR124I/EcoR124II endonuclease subunit (1038 aa).

Residues 31–249 (QSESDLEREL…LKDFTATCFQ (219 aa)) form a nuclease domain region. Positions 250 to 469 (KHTLLNVLVN…SYVITDAIRD (220 aa)) are motor 1 domain. The Helicase ATP-binding domain occupies 294 to 439 (KNWSKPESGG…YQFGFTGTPI (146 aa)). 307-314 (HTTGSGKT) contacts ATP. The DEAH box motif lies at 408-411 (DECH). The segment at 470–702 (EKVLKFKVDY…YDATKTFGNI (233 aa)) is motor 2 domain. The segment at 720–732 (GDKNTKNVVLEKS) is motor 2-helicase linker. A helicase domain region spans residues 732-860 (SYTEYMEGFT…NDIRDWQRRE (129 aa)). The segment at 859–886 (REKEAEKKEKSTTDWDDVVFEVDLLKSQ) is helicase-CTD linker. Residues 886–1038 (QEINLDYILG…EKFKGVGGKI (153 aa)) form a C-terminal domain region.

It belongs to the HsdR family. A monomer in solution. The type I restriction/modification system is composed of three polypeptides R, M and S; the restriction enzyme has stoichiometry R(2)M(2)S(1) while the methyltransferase is M(2)S(1). There is an equilibrium between R(2)M(2)S(1) and R(1)M(2)S(1); the latter is methylation and translocation proficient but restriction deficient. In terms of assembly, (Microbial infection) Holoenenzyme interacts with Escherichia phage T7 protein Ocr; this interaction leads to the inhibition of the restriction activity, but may still allow methylation and translocation.

It carries out the reaction Endonucleolytic cleavage of DNA to give random double-stranded fragments with terminal 5'-phosphates, ATP is simultaneously hydrolyzed.. Functionally, the restriction (R) subunit of a type I restriction enzyme that recognizes 5'-GAAN(6)RTCG-3' (for EcoR124I) and 5'-GAAN(7)RTCG-3' (for EcoR124II) and cleaves a random distance away. Subunit R is required for both nuclease and ATPase activities, but not for modification. After locating an unmethylated recognition site, the enzyme complex serves as a molecular motor that translocates DNA in an ATP-dependent manner until a collision occurs that triggers cleavage. The enzyme undergoes major structural changes to bring the motor domains into contact with DNA, allowing DNA translocation. This prevents DNA access to the catalytic domains of both the R and M subunits, preventing both restriction and methylation. The R(1)M(2)S(1) complex translocates an average of 555 bp/second on nicked DNA; the R(2)M(2)S(1) complex translocates at double that speed. The 2 R subunit motors are independent and track along the helical pitch of the DNA, inducing positive supercoiling ahead of themselves. The protein is Type I restriction enzyme EcoR124I/EcoR124II endonuclease subunit of Escherichia coli.